We begin with the raw amino-acid sequence, 176 residues long: Oleosin Ara h 14.0103 (176 aa).

Alanine 2 is subject to N-acetylalanine; alternate. Transmembrane regions (helical) follow at residues 50 to 70, 75 to 95, and 96 to 116; these read IIAVLVGVPTGGTLLLLSGLS, IIGLAIATPVFIFFSPVIVPA, and VVTIGLAVTGILTAGACGLTG. The disordered stretch occupies residues 156-176; that stretch reads KTKDAGQEIQTKAQDVKRSSS.

The protein belongs to the oleosin family. Expressed in seeds (at protein level).

The protein localises to the lipid droplet. It localises to the membrane. May have a structural role to stabilize the lipid body during desiccation of the seed by preventing coalescence of the oil. Probably interacts with both lipid and phospholipid moieties of lipid bodies. May also provide recognition signals for specific lipase anchorage in lipolysis during seedling growth. The chain is Oleosin Ara h 14.0103 from Arachis hypogaea (Peanut).